A 353-amino-acid polypeptide reads, in one-letter code: uncharacterized protein (353 aa).

This is an uncharacterized protein from Caenorhabditis elegans.